A 269-amino-acid chain; its full sequence is Myelin protein zero-like protein 1 (269 aa).

The first 35 residues, 1 to 35, serve as a signal peptide directing secretion; sequence MAAPAGAGALIASPDRRRCLWSVLAAALGLLTYGV. The Ig-like V-type domain occupies 36–146; it reads SALEVYTPKE…VKNPPDIVVQ (111 aa). Topologically, residues 36-162 are extracellular; the sequence is SALEVYTPKE…YVVEKEILPA (127 aa). N-linked (GlcNAc...) asparagine glycosylation is found at Asn50, Asn64, and Asn130. Cysteines 58 and 135 form a disulfide. A helical transmembrane segment spans residues 163–183; the sequence is FPVWVVVGIVTAVVLGLTLLI. The Cytoplasmic portion of the chain corresponds to 184-269; the sequence is TMILAVIYRR…SVVYADIRKN (86 aa). A disordered region spans residues 202–238; it reads GCNTSENVSPVKQVSRKSPSDTEGLVKSLPSGSHQGP. Over residues 203–213 the composition is skewed to polar residues; it reads CNTSENVSPVK. Phosphoserine is present on residues Ser206, Ser210, Ser219, and Ser221. The ITIM motif 1 signature appears at 239–244; sequence VIYAQL. The residue at position 241 (Tyr241) is a Phosphotyrosine. Residue Ser260 is modified to Phosphoserine. The ITIM motif 2 signature appears at 261-266; it reads VVYADI. A Phosphotyrosine modification is found at Tyr263.

The protein belongs to the myelin P0 protein family. As to quaternary structure, interacts with phosphorylated PTPN11/SHP-2. Phosphorylated on tyrosine residues upon stimulation with pervanadate and concanavalin-A (ConA). Phosphorylation at Tyr-241 and Tyr-263 is required for interaction with PTPN11/SHP-2. Dephosphorylated by PTPN11/SHP-2 (in vitro). Post-translationally, N-glycosylated.

Its subcellular location is the membrane. In terms of biological role, cell surface receptor, which is involved in signal transduction processes. Recruits PTPN11/SHP-2 to the cell membrane and is a putative substrate of PTPN11/SHP-2. Is a major receptor for concanavalin-A (ConA) and is involved in cellular signaling induced by ConA, which probably includes Src family tyrosine-protein kinases. May be involved in regulation of integrin-mediated cell motility. The sequence is that of Myelin protein zero-like protein 1 (MPZL1) from Bos taurus (Bovine).